The chain runs to 254 residues: 3-deoxy-manno-octulosonate cytidylyltransferase (254 aa).

This sequence belongs to the KdsB family.

Its subcellular location is the cytoplasm. The catalysed reaction is 3-deoxy-alpha-D-manno-oct-2-ulosonate + CTP = CMP-3-deoxy-beta-D-manno-octulosonate + diphosphate. The protein operates within nucleotide-sugar biosynthesis; CMP-3-deoxy-D-manno-octulosonate biosynthesis; CMP-3-deoxy-D-manno-octulosonate from 3-deoxy-D-manno-octulosonate and CTP: step 1/1. It functions in the pathway bacterial outer membrane biogenesis; lipopolysaccharide biosynthesis. Its function is as follows. Activates KDO (a required 8-carbon sugar) for incorporation into bacterial lipopolysaccharide in Gram-negative bacteria. In Pseudomonas aeruginosa (strain UCBPP-PA14), this protein is 3-deoxy-manno-octulosonate cytidylyltransferase.